The primary structure comprises 36 residues: Photosystem I reaction center subunit VIII (36 aa).

Residues 7–29 (PSILVPLVGLVFPAITLASLFIY) form a helical membrane-spanning segment.

This sequence belongs to the PsaI family.

The protein localises to the plastid. It is found in the chloroplast thylakoid membrane. Its function is as follows. May help in the organization of the PsaL subunit. The polypeptide is Photosystem I reaction center subunit VIII (Anthoceros angustus (Hornwort)).